The following is a 306-amino-acid chain: Dermonecrotic toxin LiSicTox-alphaIA1a (306 aa).

The N-terminal stretch at 1–18 is a signal peptide; the sequence is MLPYIVLVLGCWSVLSQA. Residues 19–26 constitute a propeptide that is removed on maturation; it reads AQTDDEER. His38 is an active-site residue. Mg(2+)-binding residues include Glu58 and Asp60. His74 functions as the Nucleophile in the catalytic mechanism. 2 disulfide bridges follow: Cys78-Cys84 and Cys80-Cys223. Mg(2+) is bound at residue Asp118.

It belongs to the arthropod phospholipase D family. Class II subfamily. Class IIa sub-subfamily. Mg(2+) is required as a cofactor. As to expression, expressed by the venom gland.

It is found in the secreted. The catalysed reaction is an N-(acyl)-sphingosylphosphocholine = an N-(acyl)-sphingosyl-1,3-cyclic phosphate + choline. It catalyses the reaction an N-(acyl)-sphingosylphosphoethanolamine = an N-(acyl)-sphingosyl-1,3-cyclic phosphate + ethanolamine. It carries out the reaction a 1-acyl-sn-glycero-3-phosphocholine = a 1-acyl-sn-glycero-2,3-cyclic phosphate + choline. The enzyme catalyses a 1-acyl-sn-glycero-3-phosphoethanolamine = a 1-acyl-sn-glycero-2,3-cyclic phosphate + ethanolamine. The catalysed reaction is 1-hexadecanoyl-sn-glycero-3-phosphocholine = 1-hexadecanoyl-sn-glycero-2,3-cyclic phosphate + choline. With respect to regulation, catalytic activity and hemolysis are inhibited by divalent ion chelators (1,10-phenanthroline, EDTA, and EGTA). In terms of biological role, dermonecrotic toxins cleave the phosphodiester linkage between the phosphate and headgroup of certain phospholipids (sphingolipid and lysolipid substrates), forming an alcohol (often choline) and a cyclic phosphate. This toxin acts on sphingomyelin (SM) with high activity. It discriminate between the number of carbon atoms in the substrates, since it prefers SM with six carbons in the fatty acid chain (SM6:0) to other SMs (SM12:0 &gt; SM16:0 &gt; SM18:0 &gt; SM2:0 &gt; SM24:0). It also acts on lysophosphatidylcholine (LPC) (LPC16:0 = LPC12:0 &gt; LPC18:0), and lyso-platelet activating factor (LPAF, an alkyl-LPC) but not on phosphatidylcholine (PC). It may also act on ceramide phosphoethanolamine (CPE), lysophosphatidylcholine (LPC) and lysophosphatidylethanolamine (LPE), but not on lysophosphatidylserine (LPS), and lysophosphatidylglycerol (LPG). It acts by transphosphatidylation, releasing exclusively cyclic phosphate products as second products. In vivo, it induces dermonecrosis, vascular permeability, platelet aggregation, inflammatory response, edema and cytotoxicity against renal epithelial cells. It causes direct nephrotoxicity and is directly toxic to liver. It also induces hemolysis in a complement-dependent manner as well as in a complement-independent manner. The hemolysis provoked in a complement-independent manner is composed of several steps. The toxin binds to erythrocyte membranes, hydrolyzes membrane phospholipids (SM and LPC) thus generating metabolism products that cause hemolysis, probably by provoking an increase of calcium inside cells. The calcium influx is due to the opening of L-type calcium channels, since L-type calcium channel blockers inhibit calcium influx. Is lethal to mice when intraperitoneally injected. This chain is Dermonecrotic toxin LiSicTox-alphaIA1a, found in Loxosceles intermedia (Brown spider).